Consider the following 59-residue polypeptide: Large ribosomal subunit protein bL32 (59 aa).

The interval 1–59 (MAVQQNRKTPSKRGMRRSHDSLSKPTLSTEQNTGETHRRHHISADGYYRGRKVTRGQDD) is disordered. Positions 23 to 34 (SKPTLSTEQNTG) are enriched in polar residues. The span at 49–59 (RGRKVTRGQDD) shows a compositional bias: basic residues.

This sequence belongs to the bacterial ribosomal protein bL32 family.

This chain is Large ribosomal subunit protein bL32, found in Halorhodospira halophila (strain DSM 244 / SL1) (Ectothiorhodospira halophila (strain DSM 244 / SL1)).